A 2124-amino-acid chain; its full sequence is Genome polyprotein (2124 aa).

The N-myristoyl glycine; by host moiety is linked to residue Gly-2. The host EIF4E binding stretch occupies residues 873 to 880; sequence VARDLLLI. The SF3 helicase domain maps to 1102–1264; that stretch reads VQIATYFRNF…SAATKNGKLD (163 aa). Residue 1130-1137 participates in ATP binding; the sequence is GKPGVGKS. Positions 1415–1437 are enriched in basic and acidic residues; it reads DKPKEEEEEPEEKKEKKTEESKE. The tract at residues 1415-1446 is disordered; it reads DKPKEEEEEPEEKKEKKTEESKEAAGPYNGPT. At Tyr-1442 the chain carries O-(5'-phospho-RNA)-tyrosine. One can recognise a Peptidase C3 domain in the interval 1459–1648; it reads SPLMDMEKKI…VGTRLTARMI (190 aa). Residues His-1501, Asp-1535, and Cys-1612 each act as for protease 3C activity in the active site. Residues 1893–2011 form the RdRp catalytic domain; it reads PYLYDFDYSN…ASKFELDLVM (119 aa). Active-site for RdRp activity residues include Asp-1899 and Asp-1997.

The protein belongs to the picornaviruses polyprotein family. As to quaternary structure, interacts with host EIF4E. In terms of assembly, interacts with host IFIH1/MDA5; this interaction inhibits the induction of the IFN-beta signal pathway. Post-translationally, specific enzymatic cleavages by the viral protease in vivo yield a variety of precursors and mature proteins. The polyprotein seems to be cotranslationally cleaved at the 2A/2B junction by a ribosomal skip from one codon to the next without formation of a peptide bond. This process would release the P1-2A peptide from the translational complex. In terms of processing, during virion maturation, immature virions are rendered infectious following cleavage of VP0 into VP4 and VP2. This maturation seems to be an autocatalytic event triggered by the presence of RNA in the capsid and is followed by a conformational change of the particle. Myristoylation is required during RNA encapsidation and formation of the mature virus particle. Post-translationally, uridylylated by the polymerase and is covalently linked to the 5'-end of genomic RNA. This uridylylated form acts as a nucleotide-peptide primer for the polymerase.

It is found in the virion. Its subcellular location is the host cytoplasm. The protein localises to the host nucleus. The protein resides in the host nucleolus. It localises to the host cytoplasmic vesicle membrane. The enzyme catalyses RNA(n) + a ribonucleoside 5'-triphosphate = RNA(n+1) + diphosphate. The catalysed reaction is ATP + H2O = ADP + phosphate + H(+). It catalyses the reaction Selective cleavage of Gln-|-Gly bond in the poliovirus polyprotein. In other picornavirus reactions Glu may be substituted for Gln, and Ser or Thr for Gly.. Its function is as follows. Forms an icosahedral capsid of pseudo T=3 symmetry with capsid proteins VP2 and VP3. Together they form an icosahedral capsid composed of 60 copies of each VP1, VP2, and VP3, with a diameter of approximately 300 Angstroms. VP4 lies on the inner surface of the protein shell formed by VP1, VP2 and VP3. All the three latter proteins contain a beta-sheet structure called beta-barrel jelly roll. VP1 is situated at the 12 fivefold axes, whereas VP2 and VP3 are located at the quasi-sixfold axes. Functionally, lies on the inner surface of the capsid shell. After binding to the host receptor, the capsid undergoes conformational changes. Capsid protein VP4 is released, capsid protein VP1 N-terminus is externalized, and together, they shape a pore in the host membrane through which the viral genome is translocated into the host cell cytoplasm. After genome has been released, the channel shrinks. VP0 precursor is a component of immature procapsids. In terms of biological role, involved in host translation shutoff by inhibiting cap-dependent mRNA translation. Nuclear localization is required for this function. The resulting inhibition of cellular protein synthesis serves to ensure maximal viral gene expression and to evade host immune response. Its function is as follows. Affects membrane integrity and causes an increase in membrane permeability. Functionally, associates with and induces structural rearrangements of intracellular membranes. It displays RNA-binding, nucleotide binding and NTPase activities. Interacts with IFIH1/MDA5 to inhibit the induction of the IFN-beta signal pathway. Serves as membrane anchor via its hydrophobic domain. In terms of biological role, forms a primer, VPg-pU, which is utilized by the polymerase for the initiation of RNA chains. Its function is as follows. Cysteine protease that generates mature viral proteins from the precursor polyprotein. In addition to its proteolytic activity, it binds to viral RNA, and thus influences viral genome replication. RNA and substrate cooperatively bind to the protease. Cleaves host PABP1, this cleavage is important for viral replication. Cleaves host TANK and disrupts the TANK-TBK1-IKKepsilon-IRF3 complex, thereby inhibiting the induction of the IFN-beta signal pathway. Functionally, replicates the genomic and antigenomic RNAs by recognizing replications specific signals. Performs VPg uridylylation. The protein is Genome polyprotein of Cosavirus A (isolate Human/Pakistan/0553/-) (HCoSV-A).